Reading from the N-terminus, the 418-residue chain is MSYYGSSYHIINADAKYPGYPPEHIIAEKRRARRRLLHKDGSCNVYFKHIFGEWGSYVVDIFTTLVDTKWRHMFVIFSLSYILSWLIFGSVFWLIAFHHGDLLNDPDITPCVDNVHSFTGAFLFSLETQTTIGYGYRCVTEECSVAVLMVILQSILSCIINTFIIGAALAKMATARKRAQTIRFSYFALIGMRDGKLCLMWRIGDFRPNHVVEGTVRAQLLRYTEDSEGRMTMAFKDLKLVNDQIILVTPVTIVHEIDHESPLYALDRKAVAKDNFEILVTFIYTGDSTGTSHQSRSSYVPREILWGHRFNDVLEVKRKYYKVNCLQFEGSVEVYAPFCSAKQLDWKDQQLHIEKAPPVRESCTSDTKARRRSFSAVAIVSSCENPEETTTSATHEYRETPYQKALLTLNRISVESQM.

Residues 1–67 are Cytoplasmic-facing; sequence MSYYGSSYHI…VVDIFTTLVD (67 aa). Residues 68 to 94 form a helical membrane-spanning segment; sequence TKWRHMFVIFSLSYILSWLIFGSVFWL. The Extracellular segment spans residues 95 to 117; sequence IAFHHGDLLNDPDITPCVDNVHS. Positions 118 to 134 form an intramembrane region, helical; Pore-forming; sequence FTGAFLFSLETQTTIGY. The short motif at 131–136 is the Selectivity filter element; the sequence is TIGYGY. Residues 135–143 lie on the Extracellular side of the membrane; the sequence is GYRCVTEEC. A helical membrane pass occupies residues 144–171; that stretch reads SVAVLMVILQSILSCIINTFIIGAALAK. The Cytoplasmic portion of the chain corresponds to 172 to 418; that stretch reads MATARKRAQT…LNRISVESQM (247 aa). 2 positions are modified to phosphoserine: Ser373 and Ser375.

This sequence belongs to the inward rectifier-type potassium channel (TC 1.A.2.1) family. KCNJ16 subfamily. It forms heteromeric channels with Kir4.1/KCNJ10; this interaction is required for KCNJ16 localization to the basolateral membrane in kidney cells. As a heteromer with KCNJ10, may interact with MAGI1; this interaction may facilitate KCNJ10/KCNJ16 potassium channel expression at the basolateral membrane in kidney cells. May form heteromers with Kir2.1/KCNJ2. Can form heteromeric channels with Kir4.2/KCNJ15. In terms of tissue distribution, widely expressed, with highest levels in adult and fetal kidney (at protein level). In the kidney, expressed in the proximal and distal convoluted tubules, but not in glomeruli nor collecting ducts.

Its subcellular location is the membrane. The protein resides in the basolateral cell membrane. It carries out the reaction K(+)(in) = K(+)(out). Channel activity is strongly regulated by variations of cytosolic pH; channels are activated by alkaline and inhibited by acidic pH values. Activated by phosphatidylinositol 4,5 biphosphate (PtdIns(4,5)P2). In terms of biological role, inward rectifier potassium channels are characterized by a greater tendency to allow potassium to flow into the cell rather than out of it. Their voltage dependence is regulated by the concentration of extracellular potassium; as external potassium is raised, the voltage range of the channel opening shifts to more positive voltages. The inward rectification is mainly due to the blockage of outward current by internal magnesium. KCNJ16 may be involved in the regulation of fluid and pH balance. In the kidney, together with KCNJ10, mediates basolateral K(+) recycling in distal tubules; this process is critical for Na(+) reabsorption at the tubules. This chain is Inward rectifier potassium channel 16 (KCNJ16), found in Homo sapiens (Human).